We begin with the raw amino-acid sequence, 179 residues long: Acireductone dioxygenase (179 aa).

4 residues coordinate Fe(2+): H97, H99, E103, and H141. Ni(2+)-binding residues include H97, H99, E103, and H141.

The protein belongs to the acireductone dioxygenase (ARD) family. Monomer. Requires Fe(2+) as cofactor. It depends on Ni(2+) as a cofactor.

It catalyses the reaction 1,2-dihydroxy-5-(methylsulfanyl)pent-1-en-3-one + O2 = 3-(methylsulfanyl)propanoate + CO + formate + 2 H(+). The enzyme catalyses 1,2-dihydroxy-5-(methylsulfanyl)pent-1-en-3-one + O2 = 4-methylsulfanyl-2-oxobutanoate + formate + 2 H(+). It functions in the pathway amino-acid biosynthesis; L-methionine biosynthesis via salvage pathway; L-methionine from S-methyl-5-thio-alpha-D-ribose 1-phosphate: step 5/6. In terms of biological role, catalyzes 2 different reactions between oxygen and the acireductone 1,2-dihydroxy-3-keto-5-methylthiopentene (DHK-MTPene) depending upon the metal bound in the active site. Fe-containing acireductone dioxygenase (Fe-ARD) produces formate and 2-keto-4-methylthiobutyrate (KMTB), the alpha-ketoacid precursor of methionine in the methionine recycle pathway. Ni-containing acireductone dioxygenase (Ni-ARD) produces methylthiopropionate, carbon monoxide and formate, and does not lie on the methionine recycle pathway. The chain is Acireductone dioxygenase from Granulibacter bethesdensis (strain ATCC BAA-1260 / CGDNIH1).